Reading from the N-terminus, the 156-residue chain is Large ribosomal subunit protein uL22 (156 aa).

The tract at residues 114–156 is disordered; it reads VESRPKQEKGGKAGASKASSRAARAQGSKAAAAKKTESKGGTS. Over residues 127–146 the composition is skewed to low complexity; sequence GASKASSRAARAQGSKAAAA. Residues 147-156 are compositionally biased toward basic and acidic residues; that stretch reads KKTESKGGTS.

It belongs to the universal ribosomal protein uL22 family. In terms of assembly, part of the 50S ribosomal subunit.

In terms of biological role, this protein binds specifically to 23S rRNA; its binding is stimulated by other ribosomal proteins, e.g. L4, L17, and L20. It is important during the early stages of 50S assembly. It makes multiple contacts with different domains of the 23S rRNA in the assembled 50S subunit and ribosome. Its function is as follows. The globular domain of the protein is located near the polypeptide exit tunnel on the outside of the subunit, while an extended beta-hairpin is found that lines the wall of the exit tunnel in the center of the 70S ribosome. The polypeptide is Large ribosomal subunit protein uL22 (Mycobacteroides abscessus (strain ATCC 19977 / DSM 44196 / CCUG 20993 / CIP 104536 / JCM 13569 / NCTC 13031 / TMC 1543 / L948) (Mycobacterium abscessus)).